We begin with the raw amino-acid sequence, 478 residues long: Kynureninase (478 aa).

Residues leucine 138, threonine 139, 166–169 (FPSD), aspartate 252, histidine 255, and tyrosine 277 contribute to the pyridoxal 5'-phosphate site. Lysine 278 is modified (N6-(pyridoxal phosphate)lysine). Pyridoxal 5'-phosphate-binding residues include tryptophan 315 and asparagine 343.

It belongs to the kynureninase family. In terms of assembly, homodimer. Pyridoxal 5'-phosphate serves as cofactor.

Its subcellular location is the cytoplasm. The catalysed reaction is L-kynurenine + H2O = anthranilate + L-alanine + H(+). It catalyses the reaction 3-hydroxy-L-kynurenine + H2O = 3-hydroxyanthranilate + L-alanine + H(+). Its pathway is amino-acid degradation; L-kynurenine degradation; L-alanine and anthranilate from L-kynurenine: step 1/1. It participates in cofactor biosynthesis; NAD(+) biosynthesis; quinolinate from L-kynurenine: step 2/3. Catalyzes the cleavage of L-kynurenine (L-Kyn) and L-3-hydroxykynurenine (L-3OHKyn) into anthranilic acid (AA) and 3-hydroxyanthranilic acid (3-OHAA), respectively. The protein is Kynureninase of Coccidioides immitis (strain RS) (Valley fever fungus).